The chain runs to 223 residues: Noggin-3 (223 aa).

The first 23 residues, 1-23 (MDNIPYFLATVLIFSLGFRIEEG), serve as a signal peptide directing secretion. 2 N-linked (GlcNAc...) asparagine glycosylation sites follow: Asn-60 and Asn-93.

This sequence belongs to the noggin family. In terms of assembly, homodimer; disulfide-linked.

Its subcellular location is the secreted. Its function is as follows. May function as an inhibitor of bone morphogenetic proteins (BMP) signaling during later stages of development including late phases of dorsoventral patterning, to refine the early pattern set up by the interaction of chordino and BMP2/4. Not involved in organizer function or early phases of dorsoventral pattern formation. This Danio rerio (Zebrafish) protein is Noggin-3 (nog3).